Here is a 236-residue protein sequence, read N- to C-terminus: Ribose-5-phosphate isomerase (236 aa).

Residues 27–30 (TGST), 84–87 (DGTD), and 97–100 (KGRG) contribute to the substrate site. Catalysis depends on E106, which acts as the Proton acceptor. K124 contacts substrate.

Belongs to the ribose 5-phosphate isomerase family. Homodimer.

The catalysed reaction is aldehydo-D-ribose 5-phosphate = D-ribulose 5-phosphate. Its pathway is carbohydrate degradation; pentose phosphate pathway; D-ribose 5-phosphate from D-ribulose 5-phosphate (non-oxidative stage): step 1/1. In terms of biological role, involved in the first step of the non-oxidative branch of the pentose phosphate pathway. It catalyzes the reversible conversion of ribose-5-phosphate to ribulose 5-phosphate. This chain is Ribose-5-phosphate isomerase, found in Plasmodium falciparum (isolate 3D7).